A 116-amino-acid polypeptide reads, in one-letter code: Large ribosomal subunit protein uL18 (116 aa).

This sequence belongs to the universal ribosomal protein uL18 family. Part of the 50S ribosomal subunit; part of the 5S rRNA/L5/L18/L25 subcomplex. Contacts the 5S and 23S rRNAs.

Its function is as follows. This is one of the proteins that bind and probably mediate the attachment of the 5S RNA into the large ribosomal subunit, where it forms part of the central protuberance. The polypeptide is Large ribosomal subunit protein uL18 (Exiguobacterium sibiricum (strain DSM 17290 / CCUG 55495 / CIP 109462 / JCM 13490 / 255-15)).